The chain runs to 186 residues: dTTP/UTP pyrophosphatase (186 aa).

Asp66 functions as the Proton acceptor in the catalytic mechanism.

It belongs to the Maf family. YhdE subfamily. Requires a divalent metal cation as cofactor.

It is found in the cytoplasm. It catalyses the reaction dTTP + H2O = dTMP + diphosphate + H(+). It carries out the reaction UTP + H2O = UMP + diphosphate + H(+). Nucleoside triphosphate pyrophosphatase that hydrolyzes dTTP and UTP. May have a dual role in cell division arrest and in preventing the incorporation of modified nucleotides into cellular nucleic acids. The chain is dTTP/UTP pyrophosphatase from Pyrococcus horikoshii (strain ATCC 700860 / DSM 12428 / JCM 9974 / NBRC 100139 / OT-3).